Consider the following 497-residue polypeptide: Endoglucanase 17 (497 aa).

The N-terminal stretch at 1-21 (MAAAGGAVLLLVLATATSVTG) is a signal peptide. Catalysis depends on D77, which acts as the Nucleophile. Residue H406 is part of the active site. N451 is a glycosylation site (N-linked (GlcNAc...) asparagine). Catalysis depends on residues D458 and E467.

This sequence belongs to the glycosyl hydrolase 9 (cellulase E) family.

The protein localises to the secreted. It carries out the reaction Endohydrolysis of (1-&gt;4)-beta-D-glucosidic linkages in cellulose, lichenin and cereal beta-D-glucans.. The protein is Endoglucanase 17 (GLU13) of Oryza sativa subsp. japonica (Rice).